A 301-amino-acid chain; its full sequence is tRNA dimethylallyltransferase 2 (301 aa).

11-18 (GATASGKT) provides a ligand contact to ATP. A substrate-binding site is contributed by 13–18 (TASGKT). The tract at residues 36-39 (DSRQ) is interaction with substrate tRNA.

Belongs to the IPP transferase family. Monomer. Mg(2+) serves as cofactor.

The catalysed reaction is adenosine(37) in tRNA + dimethylallyl diphosphate = N(6)-dimethylallyladenosine(37) in tRNA + diphosphate. Functionally, catalyzes the transfer of a dimethylallyl group onto the adenine at position 37 in tRNAs that read codons beginning with uridine, leading to the formation of N6-(dimethylallyl)adenosine (i(6)A). This chain is tRNA dimethylallyltransferase 2, found in Shewanella sediminis (strain HAW-EB3).